Consider the following 542-residue polypeptide: CTP synthase (542 aa).

The interval 1-265 (MARYVFITGG…DSEVLSAFGI (265 aa)) is amidoligase domain. Position 13 (S13) interacts with CTP. S13 is a binding site for UTP. Residue 14–19 (SLGKGI) participates in ATP binding. Y54 provides a ligand contact to L-glutamine. Residue D71 participates in ATP binding. D71 and E139 together coordinate Mg(2+). Residues 146 to 148 (DIE), 186 to 191 (KTKPTQ), and K222 contribute to the CTP site. Residues 186-191 (KTKPTQ) and K222 each bind UTP. Positions 291 to 541 (TIAVVGKYTG…IEAAIEQSRL (251 aa)) constitute a Glutamine amidotransferase type-1 domain. Position 353 (G353) interacts with L-glutamine. Residue C380 is the Nucleophile; for glutamine hydrolysis of the active site. Residues 381-384 (FGMQ), E404, and R469 each bind L-glutamine. Active-site residues include H514 and E516.

Belongs to the CTP synthase family. Homotetramer.

It catalyses the reaction UTP + L-glutamine + ATP + H2O = CTP + L-glutamate + ADP + phosphate + 2 H(+). It carries out the reaction L-glutamine + H2O = L-glutamate + NH4(+). The catalysed reaction is UTP + NH4(+) + ATP = CTP + ADP + phosphate + 2 H(+). It participates in pyrimidine metabolism; CTP biosynthesis via de novo pathway; CTP from UDP: step 2/2. Allosterically activated by GTP, when glutamine is the substrate; GTP has no effect on the reaction when ammonia is the substrate. The allosteric effector GTP functions by stabilizing the protein conformation that binds the tetrahedral intermediate(s) formed during glutamine hydrolysis. Inhibited by the product CTP, via allosteric rather than competitive inhibition. Its function is as follows. Catalyzes the ATP-dependent amination of UTP to CTP with either L-glutamine or ammonia as the source of nitrogen. Regulates intracellular CTP levels through interactions with the four ribonucleotide triphosphates. The protein is CTP synthase of Brucella suis (strain ATCC 23445 / NCTC 10510).